Here is a 259-residue protein sequence, read N- to C-terminus: Zinc import ATP-binding protein ZnuC (259 aa).

The ABC transporter domain maps to 11-225 (IRLENIYVHR…PEYLAIFGGQ (215 aa)). Position 43–50 (43–50 (GPNGAGKS)) interacts with ATP.

The protein belongs to the ABC transporter superfamily. Zinc importer (TC 3.A.1.15.5) family. In terms of assembly, the complex is composed of two ATP-binding proteins (ZnuC), two transmembrane proteins (ZnuB) and a solute-binding protein (ZnuA).

It localises to the cell inner membrane. It carries out the reaction Zn(2+)(out) + ATP(in) + H2O(in) = Zn(2+)(in) + ADP(in) + phosphate(in) + H(+)(in). In terms of biological role, part of the ABC transporter complex ZnuABC involved in zinc import. Responsible for energy coupling to the transport system. This Acinetobacter baylyi (strain ATCC 33305 / BD413 / ADP1) protein is Zinc import ATP-binding protein ZnuC.